We begin with the raw amino-acid sequence, 316 residues long: Putative HTH-type transcriptional regulatory protein PYRAB03670 (316 aa).

The HTH cro/C1-type domain maps to 131–189 (LKDLREKHGYSLSELANILGVSRKSLQRYEKGDSMVTLEVALRLEEVFDEALVKPINVL). Positions 142 to 161 (LSELANILGVSRKSLQRYEK) form a DNA-binding region, H-T-H motif.

The chain is Putative HTH-type transcriptional regulatory protein PYRAB03670 from Pyrococcus abyssi (strain GE5 / Orsay).